The chain runs to 826 residues: Ribonucleoside-diphosphate reductase large subunit (826 aa).

Residues Thr-171, 186–187 (SC), Gly-217, 387–391 (NLCAE), and 594–598 (PTSGC) each bind substrate. An intrachain disulfide couples Cys-187 to Cys-403. Asn-387 acts as the Proton acceptor in catalysis. The active-site Cysteine radical intermediate is Cys-389. Glu-391 functions as the Proton acceptor in the catalytic mechanism.

This sequence belongs to the ribonucleoside diphosphate reductase large chain family. As to quaternary structure, heterotetramer composed of a homodimer of the large subunit (R1) and a homodimer of the small subunit (R2). Larger multisubunit protein complex are also active, composed of (R1)n(R2)n.

It carries out the reaction a 2'-deoxyribonucleoside 5'-diphosphate + [thioredoxin]-disulfide + H2O = a ribonucleoside 5'-diphosphate + [thioredoxin]-dithiol. In terms of biological role, ribonucleoside-diphosphate reductase holoenzyme provides the precursors necessary for viral DNA synthesis. Allows virus growth in non-dividing cells, as well as reactivation from latency in infected hosts. Catalyzes the biosynthesis of deoxyribonucleotides from the corresponding ribonucleotides. The polypeptide is Ribonucleoside-diphosphate reductase large subunit (Epstein-Barr virus (strain GD1) (HHV-4)).